A 255-amino-acid chain; its full sequence is tRNA (guanine-N(1)-)-methyltransferase (255 aa).

S-adenosyl-L-methionine-binding positions include Gly113 and 133-138 (IGDYVL).

Belongs to the RNA methyltransferase TrmD family. Homodimer.

The protein resides in the cytoplasm. The catalysed reaction is guanosine(37) in tRNA + S-adenosyl-L-methionine = N(1)-methylguanosine(37) in tRNA + S-adenosyl-L-homocysteine + H(+). Specifically methylates guanosine-37 in various tRNAs. This chain is tRNA (guanine-N(1)-)-methyltransferase, found in Mannheimia succiniciproducens (strain KCTC 0769BP / MBEL55E).